Here is a 196-residue protein sequence, read N- to C-terminus: Nucleoside triphosphate pyrophosphatase (196 aa).

The Proton acceptor role is filled by aspartate 73.

The protein belongs to the Maf family. A divalent metal cation is required as a cofactor.

It localises to the cytoplasm. The enzyme catalyses a ribonucleoside 5'-triphosphate + H2O = a ribonucleoside 5'-phosphate + diphosphate + H(+). It carries out the reaction a 2'-deoxyribonucleoside 5'-triphosphate + H2O = a 2'-deoxyribonucleoside 5'-phosphate + diphosphate + H(+). Functionally, nucleoside triphosphate pyrophosphatase. May have a dual role in cell division arrest and in preventing the incorporation of modified nucleotides into cellular nucleic acids. This is Nucleoside triphosphate pyrophosphatase from Anaplasma marginale (strain Florida).